The primary structure comprises 926 residues: DNA topoisomerase 3-alpha (926 aa).

The 145-residue stretch at 10 to 154 folds into the Toprim domain; it reads TVLNVAEKPS…NLFIRRAHFS (145 aa). The Mg(2+) site is built by Glu-16, Asp-123, and Asp-125. One can recognise a Topo IA-type catalytic domain in the interval 172–604; it reads NQLFAEAVDA…CLQQMKACFL (433 aa). The tract at residues 219–224 is interaction with DNA; the sequence is SYGPCQ. Tyr-342 acts as the O-(5'-phospho-DNA)-tyrosine intermediate in catalysis. The segment at 642–670 adopts a C4-type zinc-finger fold; it reads CNLCNESDMALRKNRDGNFMVGCMNYPQC. Disordered stretches follow at residues 740-760 and 775-806; these read SRSQ…QGSN and HAST…TVSC. Over residues 750 to 760 the composition is skewed to polar residues; the sequence is TAPSNNIQGSN. Residues 767–782 form a CCHC-type 1 zinc finger; the sequence is CIHCQQRGHASTNCPS. Residues Cys-806, Cys-809, Cys-831, and Cys-836 each coordinate Zn(2+). A GRF-type zinc finger spans residues 806–845; the sequence is CNTCGSQCVLRTANTEANRGRQFFSCPTQGCSFFAWEDSI. The segment at 849–890 is disordered; sequence SGNATTGSNSGGSGRRGSRGRGRGGRGGQSSGGRRGSGTSFV. The span at 873–884 shows a compositional bias: gly residues; sequence GRGGQSSGGRRG. The CCHC-type 2 zinc-finger motif lies at 901–917; sequence RCFSCGDPSHFANACPN.

The protein belongs to the type IA topoisomerase family. As to quaternary structure, component of the RMI complex, containing at least TOP3A and RMI1. The RMI complex interacts with RECQL4A. Mg(2+) is required as a cofactor.

The enzyme catalyses ATP-independent breakage of single-stranded DNA, followed by passage and rejoining.. In terms of biological role, releases the supercoiling and torsional tension of DNA introduced during the DNA replication and transcription by transiently cleaving and rejoining one strand of the DNA duplex. Introduces a single-strand break via transesterification at a target site in duplex DNA. The scissile phosphodiester is attacked by the catalytic tyrosine of the enzyme, resulting in the formation of a DNA-(5'-phosphotyrosyl)-enzyme intermediate and the expulsion of a 3'-OH DNA strand. The free DNA strand then undergoes passage around the unbroken strand thus removing DNA supercoils. Finally, in the religation step, the DNA 3'-OH attacks the covalent intermediate to expel the active-site tyrosine and restore the DNA phosphodiester backbone. Essential component of the RMI complex, a complex that plays an important role in the resolution step of homologous recombination, in a process called Holliday Junction dissolution, to limit DNA crossover formation in cells. Together with RMI1, is essential for the resolution of meiotic recombination intermediates, a step that prevents entanglement of the parental chromosomes. May have DNA decatenation activity. This chain is DNA topoisomerase 3-alpha (TOP3A), found in Arabidopsis thaliana (Mouse-ear cress).